The following is a 330-amino-acid chain: Putative [LysW]-L-2-aminoadipate/[LysW]-L-glutamate phosphate reductase (330 aa).

10 to 13 (SGYI) is an NADP(+) binding site. Residue Cys142 is part of the active site. Position 297 (Asn297) interacts with NADP(+).

Belongs to the NAGSA dehydrogenase family. Type 1 subfamily. LysY sub-subfamily.

It is found in the cytoplasm. The catalysed reaction is [amino-group carrier protein]-C-terminal-N-(1-carboxy-5-oxopentan-1-yl)-L-glutamine + phosphate + NADP(+) = [amino-group carrier protein]-C-terminal-N-(1-carboxy-5-phosphooxy-5-oxopentan-1-yl)-L-glutamine + NADPH + H(+). It carries out the reaction [amino-group carrier protein]-C-terminal-gamma-(L-glutamyl-5-semialdehyde)-L-glutamate + phosphate + NADP(+) = [amino-group carrier protein]-C-terminal-gamma-(5-phospho-L-glutamyl)-L-glutamate + NADPH + H(+). Its pathway is amino-acid biosynthesis; L-lysine biosynthesis via AAA pathway; L-lysine from L-alpha-aminoadipate (Thermus route): step 3/5. It participates in amino-acid biosynthesis; L-arginine biosynthesis. Its function is as follows. Involved in both the arginine and lysine biosynthetic pathways. The sequence is that of Putative [LysW]-L-2-aminoadipate/[LysW]-L-glutamate phosphate reductase from Pyrococcus horikoshii (strain ATCC 700860 / DSM 12428 / JCM 9974 / NBRC 100139 / OT-3).